Reading from the N-terminus, the 46-residue chain is Large ribosomal subunit protein bL36A (46 aa).

This sequence belongs to the bacterial ribosomal protein bL36 family.

The sequence is that of Large ribosomal subunit protein bL36A from Sodalis glossinidius (strain morsitans).